Reading from the N-terminus, the 230-residue chain is tRNA (guanine-N(7)-)-methyltransferase (230 aa).

Residues Glu-61, Glu-86, Asp-113, and Asp-135 each coordinate S-adenosyl-L-methionine. Residue Asp-135 is part of the active site. Residues Lys-139, Asp-171, and 209–212 each bind substrate; that span reads TRYE.

The protein belongs to the class I-like SAM-binding methyltransferase superfamily. TrmB family.

It catalyses the reaction guanosine(46) in tRNA + S-adenosyl-L-methionine = N(7)-methylguanosine(46) in tRNA + S-adenosyl-L-homocysteine. It participates in tRNA modification; N(7)-methylguanine-tRNA biosynthesis. Its function is as follows. Catalyzes the formation of N(7)-methylguanine at position 46 (m7G46) in tRNA. This is tRNA (guanine-N(7)-)-methyltransferase from Azorhizobium caulinodans (strain ATCC 43989 / DSM 5975 / JCM 20966 / LMG 6465 / NBRC 14845 / NCIMB 13405 / ORS 571).